A 272-amino-acid polypeptide reads, in one-letter code: 2-succinyl-6-hydroxy-2,4-cyclohexadiene-1-carboxylate synthase (272 aa).

This sequence belongs to the AB hydrolase superfamily. MenH family. In terms of assembly, monomer.

The enzyme catalyses 5-enolpyruvoyl-6-hydroxy-2-succinyl-cyclohex-3-ene-1-carboxylate = (1R,6R)-6-hydroxy-2-succinyl-cyclohexa-2,4-diene-1-carboxylate + pyruvate. It functions in the pathway quinol/quinone metabolism; 1,4-dihydroxy-2-naphthoate biosynthesis; 1,4-dihydroxy-2-naphthoate from chorismate: step 3/7. It participates in quinol/quinone metabolism; menaquinone biosynthesis. In terms of biological role, catalyzes a proton abstraction reaction that results in 2,5-elimination of pyruvate from 2-succinyl-5-enolpyruvyl-6-hydroxy-3-cyclohexene-1-carboxylate (SEPHCHC) and the formation of 2-succinyl-6-hydroxy-2,4-cyclohexadiene-1-carboxylate (SHCHC). This chain is 2-succinyl-6-hydroxy-2,4-cyclohexadiene-1-carboxylate synthase, found in Yersinia pseudotuberculosis serotype IB (strain PB1/+).